Reading from the N-terminus, the 449-residue chain is Glucose-6-phosphate isomerase (449 aa).

The Proton donor role is filled by Glu-290. Active-site residues include His-311 and Lys-425.

It belongs to the GPI family.

It is found in the cytoplasm. The enzyme catalyses alpha-D-glucose 6-phosphate = beta-D-fructose 6-phosphate. The protein operates within carbohydrate biosynthesis; gluconeogenesis. It participates in carbohydrate degradation; glycolysis; D-glyceraldehyde 3-phosphate and glycerone phosphate from D-glucose: step 2/4. Catalyzes the reversible isomerization of glucose-6-phosphate to fructose-6-phosphate. The polypeptide is Glucose-6-phosphate isomerase (Clostridium tetani (strain Massachusetts / E88)).